We begin with the raw amino-acid sequence, 361 residues long: Phosphoribosylformylglycinamidine cyclo-ligase (361 aa).

It belongs to the AIR synthase family.

The protein resides in the cytoplasm. The enzyme catalyses 2-formamido-N(1)-(5-O-phospho-beta-D-ribosyl)acetamidine + ATP = 5-amino-1-(5-phospho-beta-D-ribosyl)imidazole + ADP + phosphate + H(+). It participates in purine metabolism; IMP biosynthesis via de novo pathway; 5-amino-1-(5-phospho-D-ribosyl)imidazole from N(2)-formyl-N(1)-(5-phospho-D-ribosyl)glycinamide: step 2/2. This chain is Phosphoribosylformylglycinamidine cyclo-ligase, found in Bartonella henselae (strain ATCC 49882 / DSM 28221 / CCUG 30454 / Houston 1) (Rochalimaea henselae).